The sequence spans 506 residues: Chromosomal replication initiator protein DnaA (506 aa).

The segment at 1 to 87 (MSVELWQQCV…IGSRRSSAPR (87 aa)) is domain I, interacts with DnaA modulators. The segment at 87 to 169 (RAAPNAPVSA…QVEGALKHTS (83 aa)) is domain II. Positions 135-154 (DSFDAMAEPAAAPPSGGGRA) are disordered. The segment covering 139-148 (AMAEPAAAPP) has biased composition (low complexity). The tract at residues 170-386 (YLNRTFTFDT…GALKRVIAHS (217 aa)) is domain III, AAA+ region. Residues glycine 214, glycine 216, lysine 217, and threonine 218 each coordinate ATP. The tract at residues 387 to 506 (HFMGRDITIE…YKNLLRTLTT (120 aa)) is domain IV, binds dsDNA.

This sequence belongs to the DnaA family. Oligomerizes as a right-handed, spiral filament on DNA at oriC.

The protein resides in the cytoplasm. Plays an essential role in the initiation and regulation of chromosomal replication. ATP-DnaA binds to the origin of replication (oriC) to initiate formation of the DNA replication initiation complex once per cell cycle. Binds the DnaA box (a 9 base pair repeat at the origin) and separates the double-stranded (ds)DNA. Forms a right-handed helical filament on oriC DNA; dsDNA binds to the exterior of the filament while single-stranded (ss)DNA is stabiized in the filament's interior. The ATP-DnaA-oriC complex binds and stabilizes one strand of the AT-rich DNA unwinding element (DUE), permitting loading of DNA polymerase. After initiation quickly degrades to an ADP-DnaA complex that is not apt for DNA replication. Binds acidic phospholipids. Functionally, non-cooperatively binds DnaA boxes in the minimal plasmid RK2 replication origin (oriV). In vitro in the presence of plasmid RK2-derived TrfA and E.coli protein HU, forms an open complex at oriV. This complex was not however competent for formation of a pre-priming complex with E.coli DnaB and DnaC. Broad host range plasmid RK2 requires not only DnaA for replication but also TrfA and host factors. This chain is Chromosomal replication initiator protein DnaA, found in Pseudomonas putida (strain ATCC 47054 / DSM 6125 / CFBP 8728 / NCIMB 11950 / KT2440).